Reading from the N-terminus, the 317-residue chain is D-alanine--D-alanine ligase (317 aa).

An ATP-grasp domain is found at Lys-103–Glu-299. Position 130–183 (Lys-130–His-183) interacts with ATP. Mg(2+) is bound by residues Asp-251, Glu-265, and Asn-267.

The protein belongs to the D-alanine--D-alanine ligase family. Requires Mg(2+) as cofactor. Mn(2+) serves as cofactor.

The protein resides in the cytoplasm. The enzyme catalyses 2 D-alanine + ATP = D-alanyl-D-alanine + ADP + phosphate + H(+). It functions in the pathway cell wall biogenesis; peptidoglycan biosynthesis. Cell wall formation. This Wolbachia sp. subsp. Drosophila simulans (strain wRi) protein is D-alanine--D-alanine ligase.